Consider the following 538-residue polypeptide: Phosphoenolpyruvate carboxykinase (ATP) (538 aa).

Residues Arg64, Tyr206, and Lys212 each contribute to the substrate site. ATP-binding positions include Lys212, His231, and Gly247–Thr255. Positions 212 and 231 each coordinate Mn(2+). Asp268 contacts Mn(2+). ATP is bound by residues Glu296, Arg332, Arg448 to Ile449, and Thr454. Residue Arg332 coordinates substrate.

It belongs to the phosphoenolpyruvate carboxykinase (ATP) family. Monomer. Mn(2+) is required as a cofactor.

It is found in the cytoplasm. The enzyme catalyses oxaloacetate + ATP = phosphoenolpyruvate + ADP + CO2. It participates in carbohydrate biosynthesis; gluconeogenesis. In terms of biological role, involved in the gluconeogenesis. Catalyzes the conversion of oxaloacetate (OAA) to phosphoenolpyruvate (PEP) through direct phosphoryl transfer between the nucleoside triphosphate and OAA. The polypeptide is Phosphoenolpyruvate carboxykinase (ATP) (Enterobacter sp. (strain 638)).